We begin with the raw amino-acid sequence, 457 residues long: Dihydrolipoyllysine-residue acetyltransferase component of pyruvate dehydrogenase complex, mitochondrial (457 aa).

Residues M1–Y30 constitute a mitochondrion transit peptide. Positions H36–V112 constitute a Lipoyl-binding domain. N6-lipoyllysine is present on K77. Positions A129–G168 are disordered. Basic and acidic residues predominate over residues P139–S149. Position 148 is an N6-crotonyllysine (K148). The Peripheral subunit-binding (PSBD) domain occupies N179–I216. Catalysis depends on residues H430 and D434.

The protein belongs to the 2-oxoacid dehydrogenase family. Eukaryotic pyruvate dehydrogenase (PDH) complexes are organized as a core consisting of the oligomeric dihydrolipoamide acetyl-transferase (E2), around which are arranged multiple copies of pyruvate dehydrogenase (E1), dihydrolipoamide dehydrogenase (E3) and protein X (E3BP) bound by non-covalent bonds. Interacts with SIR5; the interaction is direct. (R)-lipoate serves as cofactor. In terms of processing, decrotonylated at 'Lys-148' by SIR5, which inhibits the activity of the pyruvate dehydrogenase complex (PDC).

The protein localises to the mitochondrion matrix. It catalyses the reaction N(6)-[(R)-dihydrolipoyl]-L-lysyl-[protein] + acetyl-CoA = N(6)-[(R)-S(8)-acetyldihydrolipoyl]-L-lysyl-[protein] + CoA. Its function is as follows. The pyruvate dehydrogenase complex catalyzes the overall conversion of pyruvate to acetyl-CoA and CO(2). High pyruvate dehydrogenase complex activity is required for sufficient energy production during germination of conidia. In Fusarium oxysporum f. sp. lycopersici (strain 4287 / CBS 123668 / FGSC 9935 / NRRL 34936) (Fusarium vascular wilt of tomato), this protein is Dihydrolipoyllysine-residue acetyltransferase component of pyruvate dehydrogenase complex, mitochondrial.